We begin with the raw amino-acid sequence, 192 residues long: Orotate phosphoribosyltransferase (192 aa).

Residues Arg84, Lys88, and 110-118 (DDVLTTGNS) contribute to the 5-phospho-alpha-D-ribose 1-diphosphate site. Orotate is bound by residues Thr114 and Arg142.

The protein belongs to the purine/pyrimidine phosphoribosyltransferase family. PyrE subfamily. As to quaternary structure, homodimer. The cofactor is Mg(2+).

The enzyme catalyses orotidine 5'-phosphate + diphosphate = orotate + 5-phospho-alpha-D-ribose 1-diphosphate. It participates in pyrimidine metabolism; UMP biosynthesis via de novo pathway; UMP from orotate: step 1/2. Catalyzes the transfer of a ribosyl phosphate group from 5-phosphoribose 1-diphosphate to orotate, leading to the formation of orotidine monophosphate (OMP). This Pyrobaculum calidifontis (strain DSM 21063 / JCM 11548 / VA1) protein is Orotate phosphoribosyltransferase.